The following is a 1522-amino-acid chain: Histone-lysine N-methyltransferase EZH2 (1522 aa).

Residues 1-196 are disordered; sequence MSPARGDANA…PKTPTPKNTE (196 aa). The span at 39 to 61 shows a compositional bias: basic and acidic residues; the sequence is NRENLRDRDRADKLEKLEKDAHA. Composition is skewed to low complexity over residues 64–76 and 103–130; these read QTQT…PVTV and RGST…SPSL. Over residues 141–162 the composition is skewed to polar residues; that stretch reads ILASRTSRFSNRTGIRDSQSPS. Positions 180-195 are enriched in low complexity; the sequence is ATSNTPAPKTPTPKNT. The interval 190–220 is SBD domain; sequence PTPKNTEWTVDKIASALSVLAEEVPQNHSRL. The interval 221 to 250 is EBD domain; it reads VNFLLEETEKRAPQPRHLSKTDPFAHMKSK. The tract at residues 251–300 is BAM domain; it reads AIDANRPRPEGVPTMDVKFKQHSGEYGKSRNSGRRFQYPVVCIKPDREPV. Residues 301–320 are SAL domain; it reads PPYRFHHAEIRKNILALNSQ. Positions 321–360 are SRM domain; sequence LNFVPHLRDVDPNSAEEQKYSAWLMDLENLDSKSGFKIQP. The segment at 361–480 is SANT1L domain; that stretch reads RSQKIAKRAQ…PIFDNKRAKD (120 aa). The segment at 406–426 is disordered; sequence PESDDSMTPQQKSNLLDTYSD. A compositionally biased stretch (polar residues) spans 411 to 422; sequence SMTPQQKSNLLD. The tract at residues 481-560 is MCSS domain; sequence APGSQKPPDE…EQRQKTEGGS (80 aa). 26 residues coordinate Zn(2+): C508, C511, C516, H518, C570, C574, C615, C625, C685, H687, C691, C697, C699, C709, C713, C715, C720, C727, C729, C736, C746, C748, C755, C760, C763, and C784. The segment at 561–650 is SANT2L domain; the sequence is ANAPPAHPPC…PVEPRTIPKQ (90 aa). One can recognise a CXC domain in the interval 658–780; it reads RRKKQLMSDW…PENAYDEVLH (123 aa). The SET domain maps to 795–919; sequence KAVVLGKSQL…AGEELFFNYG (125 aa). The S-adenosyl-L-homocysteine site is built by Y809, K852, S854, and Y855. S-adenosyl-L-methionine contacts are provided by Y809, K852, S854, Y855, N880, H881, and T926. H881 serves as a coordination point for S-adenosyl-L-homocysteine. K927 contacts S-adenosyl-L-homocysteine. The disordered stretch occupies residues 933–1522; the sequence is NEQSGAETTP…KPARYRDEGE (590 aa). Residues 935 to 946 are compositionally biased toward polar residues; it reads QSGAETTPQQPK. Acidic residues predominate over residues 971 to 988; that stretch reads GFDDDDRDGNDSDPDDLW. A compositionally biased stretch (low complexity) spans 992 to 1024; the sequence is QQQQQQQQQQQQQQQQQQQQQQQQQQQQQQQQQ. Residues 1025-1038 show a composition bias toward polar residues; that stretch reads AQKPQPSTSHQPQS. A compositionally biased stretch (basic and acidic residues) spans 1053 to 1066; sequence SPDKQLRRENHDAQ. Low complexity predominate over residues 1072-1091; it reads QFQQQEQQQQQQQQQQQQQQ. Over residues 1127-1136 the composition is skewed to polar residues; the sequence is DSSSGGSANE. Positions 1142-1162 are enriched in basic residues; it reads KPSRRGGARPGAGRKPKHRPP. Basic and acidic residues-rich tracts occupy residues 1207-1221 and 1228-1238; these read SDSK…TDKE and VNEKDREKGRD. Over residues 1255-1299 the composition is skewed to low complexity; that stretch reads KSAPSPAKKQASSPTKISDSNRTTSKNTSSNNNNNTNNNNNNNNN. Over residues 1316–1330 the composition is skewed to polar residues; the sequence is HLTNSQPAALSPSAT. 2 stretches are compositionally biased toward low complexity: residues 1355 to 1385 and 1415 to 1428; these read STMT…SSSS and SSSL…SVFS. A compositionally biased stretch (polar residues) spans 1455 to 1464; the sequence is SGLNSTSLSQ. The segment covering 1465–1494 has biased composition (basic and acidic residues); sequence ERGEKHEKHEKEKPKEKKGEKERERERDRS.

It belongs to the class V-like SAM-binding methyltransferase superfamily. Histone-lysine methyltransferase family. EZ subfamily. In terms of assembly, component of the polycomb repressive complex 2 (PRC2) that consists of four core subunits icluding EZH2, EED, SUZ12, and RBBP4, among which EZH2 is the catalytic subunit and which minimally requires EED and SUZ12 for catalysis.

Its subcellular location is the nucleus. The catalysed reaction is L-lysyl(27)-[histone H3] + 3 S-adenosyl-L-methionine = N(6),N(6),N(6)-trimethyl-L-lysyl(27)-[histone H3] + 3 S-adenosyl-L-homocysteine + 3 H(+). Its activity is regulated as follows. The end product of PRC2 catalysis, H3K27me3, interacts with EED to stimulate the enzymatic activity of PRC2 allosterically. The enzymatic activity of PRC2 is regulated in a very complex manner and PCR2 can adopt different stages including the autoinhibited (A); SAM-bound autoinhibited (A'), basal (B), and H3K27me3-stimulated (S) stages. Actictivity is inhibited by pyridone inhibitors such as GSK126. Its function is as follows. Catalytic subunit of the of the Polycomb Repressive Complex 2 (PRC2), a histone H3 lysine methyltransferase responsible for generating mono-, di-, and tri-methylation on Lys27 (H3K27me1, H3K27me2 and H3K27me3). The tri-methylated form is known to be critical in gene repression, and its proper placement is essential in defining repression patterns during development. The PRC2 complex interacts with thousands of RNA species in vivo, but the physiological function of RNA binding has still to be determined. The polypeptide is Histone-lysine N-methyltransferase EZH2 (Chaetomium thermophilum (strain DSM 1495 / CBS 144.50 / IMI 039719) (Thermochaetoides thermophila)).